Here is a 91-residue protein sequence, read N- to C-terminus: Elongation factor 1-beta (91 aa).

Belongs to the EF-1-beta/EF-1-delta family.

Promotes the exchange of GDP for GTP in EF-1-alpha/GDP, thus allowing the regeneration of EF-1-alpha/GTP that could then be used to form the ternary complex EF-1-alpha/GTP/AAtRNA. In Pyrococcus abyssi (strain GE5 / Orsay), this protein is Elongation factor 1-beta (ef1b).